A 338-amino-acid chain; its full sequence is Queuosine 5'-phosphate N-glycosylase/hydrolase (338 aa).

Met1 carries the N-acetylmethionine modification. His51, Phe235, Asp237, Asp311, Tyr312, and Asp316 together coordinate queuine. The active-site Nucleophile or transition state stabilizer is the Asp237.

The protein belongs to the QNG1 protein family. As to expression, highly expressed in liver.

The catalysed reaction is queuosine 5'-phosphate + H2O = queuine + D-ribose 5-phosphate. Functionally, catalyzes the hydrolysis of queuosine 5'-phosphate, releasing the nucleobase queuine (q). Is required for salvage of queuine from exogenous queuosine (Q) that is imported and then converted to queuosine 5'-phosphate intracellularly. The sequence is that of Queuosine 5'-phosphate N-glycosylase/hydrolase from Mus musculus (Mouse).